A 213-amino-acid chain; its full sequence is High frequency lysogenization protein HflD homolog (213 aa).

Residues 79-126 (QGLNAELTRYTLSLMVLERKLSSAKGALDTLGNRINGLQRQLEHFDLQ) adopt a coiled-coil conformation.

The protein belongs to the HflD family.

Its subcellular location is the cytoplasm. It is found in the cell inner membrane. This Shigella boydii serotype 18 (strain CDC 3083-94 / BS512) protein is High frequency lysogenization protein HflD homolog.